We begin with the raw amino-acid sequence, 189 residues long: Putative biopolymer transport protein ExbB-like 1 (189 aa).

3 consecutive transmembrane segments (helical) span residues Phe-14 to Phe-34, Leu-99 to Val-119, and Leu-147 to Leu-167.

The protein belongs to the ExbB/TolQ family.

The protein resides in the cell inner membrane. The chain is Putative biopolymer transport protein ExbB-like 1 from Helicobacter pylori (strain ATCC 700392 / 26695) (Campylobacter pylori).